A 541-amino-acid polypeptide reads, in one-letter code: Chaperonin GroEL, cyanelle (541 aa).

Residues Thr-29–Pro-32, Asp-86–Thr-90, Gly-413, Asn-479–Ala-481, and Asp-495 contribute to the ATP site.

It belongs to the chaperonin (HSP60) family. Forms a cylinder of 14 subunits composed of two heptameric rings stacked back-to-back. Interacts with the co-chaperonin GroES.

It is found in the plastid. It localises to the cyanelle. The catalysed reaction is ATP + H2O + a folded polypeptide = ADP + phosphate + an unfolded polypeptide.. Its function is as follows. Together with its co-chaperonin GroES, plays an essential role in assisting protein folding. The GroEL-GroES system forms a nano-cage that allows encapsulation of the non-native substrate proteins and provides a physical environment optimized to promote and accelerate protein folding. This Cyanophora paradoxa protein is Chaperonin GroEL, cyanelle.